Reading from the N-terminus, the 301-residue chain is Glycine--tRNA ligase alpha subunit (301 aa).

This sequence belongs to the class-II aminoacyl-tRNA synthetase family. As to quaternary structure, tetramer of two alpha and two beta subunits.

The protein resides in the cytoplasm. It catalyses the reaction tRNA(Gly) + glycine + ATP = glycyl-tRNA(Gly) + AMP + diphosphate. This is Glycine--tRNA ligase alpha subunit from Shewanella piezotolerans (strain WP3 / JCM 13877).